The chain runs to 79 residues: MRFIIRTVMLIALVWIGLLLSGYGVLIGSKENAAGLGLQCTYLTARGTSTVQYLHTKSGFLGITDCPLLRKSNIVVDNG.

Positions 1–33 (MRFIIRTVMLIALVWIGLLLSGYGVLIGSKENA) are cleaved as a signal peptide.

This is an uncharacterized protein from Escherichia coli O6:K15:H31 (strain 536 / UPEC).